Reading from the N-terminus, the 1516-residue chain is Neurite extension and migration factor (1516 aa).

The span at 380-405 (LDKKKGKEEGQEDKGVEKKDGKDNGE) shows a compositional bias: basic and acidic residues. Disordered stretches follow at residues 380-440 (LDKK…GSFS), 589-610 (QKKK…SQKQ), 1158-1225 (TFND…STKK), 1373-1419 (TPQE…PGYN), and 1437-1479 (LGNN…ESGT). Polar residues-rich tracts occupy residues 596–610 (NTNT…SQKQ), 1158–1170 (TFND…STNN), and 1185–1194 (GAMNQSSSQK). Residues 1443–1453 (THKKLYRHKSS) are compositionally biased toward basic residues. Positions 1456–1479 (ALRDEKCKGKHMEREQVHKDESGT) are enriched in basic and acidic residues.

As to expression, highly expressed in fetal and adult brain, predominantly in the cerebral cortex and the cerebellum. Also expressed in other tissues but to a lesser extent.

Its subcellular location is the nucleus. It localises to the cytoplasm. In terms of biological role, involved in neurite outgrowth by regulating cell-cell adhesion via the N-cadherin signaling pathway. May act by regulating expression of protein-coding genes, such as N-cadherins and integrin beta-1 (ITGB1). This is Neurite extension and migration factor from Homo sapiens (Human).